The primary structure comprises 274 residues: NH(3)-dependent NAD(+) synthetase (274 aa).

46–53 contributes to the ATP binding site; sequence GISGGQDS. Position 52 (aspartate 52) interacts with Mg(2+). Arginine 140 serves as a coordination point for deamido-NAD(+). Threonine 160 is an ATP binding site. Glutamate 165 serves as a coordination point for Mg(2+). The deamido-NAD(+) site is built by lysine 173 and aspartate 180. The ATP site is built by lysine 189 and threonine 211. 260–261 contacts deamido-NAD(+); that stretch reads HK.

It belongs to the NAD synthetase family. In terms of assembly, homodimer.

It carries out the reaction deamido-NAD(+) + NH4(+) + ATP = AMP + diphosphate + NAD(+) + H(+). It functions in the pathway cofactor biosynthesis; NAD(+) biosynthesis; NAD(+) from deamido-NAD(+) (ammonia route): step 1/1. Its function is as follows. Catalyzes the ATP-dependent amidation of deamido-NAD to form NAD. Uses ammonia as a nitrogen source. The chain is NH(3)-dependent NAD(+) synthetase from Lactococcus lactis subsp. lactis (strain IL1403) (Streptococcus lactis).